The sequence spans 76 residues: Protein CsbA (76 aa).

At 1–5 (MITKA) the chain is on the extracellular side. The chain crosses the membrane as a helical span at residues 6–22 (VFALFFPFMLVVLFTRV). Over 23–27 (TFNHY) the chain is Cytoplasmic. The chain crosses the membrane as a helical span at residues 28 to 44 (VAIALTAALLFASYLKG). Over 45 to 49 (YTETY) the chain is Extracellular. Residues 50–66 (FIVGLDVVSLVAGGLYM) form a helical membrane-spanning segment. The Cytoplasmic segment spans residues 67-76 (AKKAAEKKEE).

The protein localises to the cell membrane. The sequence is that of Protein CsbA (csbA) from Bacillus subtilis (strain 168).